The sequence spans 385 residues: uncharacterized protein (385 aa).

Belongs to the phage portal family. HK97 subfamily.

This is an uncharacterized protein from Rickettsia felis (strain ATCC VR-1525 / URRWXCal2) (Rickettsia azadi).